Consider the following 624-residue polypeptide: Aliphatic sulfonate oxidoreductase, WOR-like subunit (624 aa).

8 residues coordinate tungstopterin: Lys77, Ser93, Val94, Ser96, His195, Ala196, Gly198, and Tyr199. 3 residues coordinate [4Fe-4S] cluster: Asp299, Cys302, and Cys306. Tungstopterin contacts are provided by Asp353, Leu357, Asp358, Gly359, Thr470, Asp490, Ile494, Cys495, and Asn496. Cys495 is a binding site for [4Fe-4S] cluster. Positions 552 to 575 (KDDDNPPRFYEPLPSGPVKGKAPN) are disordered.

Belongs to the AOR/FOR family. As to quaternary structure, heterodimer composed of a small WOR5-S subunit, with four [4Fe-4S] clusters, and a large WOR5-L subunit, containing the active site tungsto-bispyranopterin cofactor as well as another [4Fe-4S] cluster. [4Fe-4S] cluster serves as cofactor. Requires tungstopterin as cofactor.

The protein resides in the cytoplasm. It catalyses the reaction an aliphatic sulfonate + 4 oxidized [4Fe-4S]-[ferredoxin] + 2 H2O = 4 reduced [4Fe-4S]-[ferredoxin] + a carboxylate + sulfite + 6 H(+). It carries out the reaction an aliphatic sulfonate + 2 oxidized [4Fe-4S]-[ferredoxin] + H2O = 2 reduced [4Fe-4S]-[ferredoxin] + an aldehyde + sulfite + 3 H(+). The enzyme catalyses 2 oxidized [4Fe-4S]-[ferredoxin] + an aldehyde + H2O = 2 reduced [4Fe-4S]-[ferredoxin] + a carboxylate + 3 H(+). The catalysed reaction is 4 oxidized [4Fe-4S]-[ferredoxin] + taurine + 2 H2O = 4 reduced [4Fe-4S]-[ferredoxin] + sulfite + glycine + 6 H(+). It catalyses the reaction 2 oxidized [4Fe-4S]-[ferredoxin] + taurine + H2O = aminoacetaldehyde + 2 reduced [4Fe-4S]-[ferredoxin] + sulfite + 3 H(+). It carries out the reaction aminoacetaldehyde + 2 oxidized [4Fe-4S]-[ferredoxin] + H2O = 2 reduced [4Fe-4S]-[ferredoxin] + glycine + 3 H(+). WOR-like catalytic subunit of an oxidoreductase that can desulfonate and oxidize aliphatic sulfonates such as taurine. The activity involves two steps: an oxidative desulfonation reaction, followed by the activation of a second water molecule and oxidation of the resulting aldehyde. May be involved in the oxidation of various aliphatic sulfonates and also phosphonates. In vitro, has a broad substrate specificity with a high affinity for several substituted and nonsubstituted aliphatic and aromatic aldehydes with various chain lengths, with methyl viologen or benzyl viologen as electron acceptor. Ferredoxin is the physiological electron acceptor. In Pyrococcus furiosus (strain ATCC 43587 / DSM 3638 / JCM 8422 / Vc1), this protein is Aliphatic sulfonate oxidoreductase, WOR-like subunit.